Consider the following 187-residue polypeptide: MINFSTNSDLILRESVVGSRRISNYWWASVVLLGASGFLIVGISSYLQYDLVPFLSAKNIVFVPQGLVMCFYGSAGILLSIYLWLTIFWNVGEGYNEFDKVNGLVRIFRWGYPGKDRRINIVYDIKDIQAIRVEIKEGINPRRVIYLKIKGTRDMPLTRIGQPLTLAEIEEQAARLARFLQVNIEGI.

Helical transmembrane passes span 25-47 (YWWASVVLLGASGFLIVGISSYL) and 62-84 (FVPQGLVMCFYGSAGILLSIYLW).

The protein belongs to the Ycf4 family.

Its subcellular location is the plastid. It localises to the chloroplast thylakoid membrane. Seems to be required for the assembly of the photosystem I complex. This Mesostigma viride (Green alga) protein is Photosystem I assembly protein Ycf4.